The sequence spans 436 residues: Trigger factor (436 aa).

The PPIase FKBP-type domain maps to 163 to 248; the sequence is DDRIVLDFAG…VKEVAEAVLP (86 aa).

It belongs to the FKBP-type PPIase family. Tig subfamily.

Its subcellular location is the cytoplasm. It catalyses the reaction [protein]-peptidylproline (omega=180) = [protein]-peptidylproline (omega=0). Its function is as follows. Involved in protein export. Acts as a chaperone by maintaining the newly synthesized protein in an open conformation. Functions as a peptidyl-prolyl cis-trans isomerase. The chain is Trigger factor from Bordetella avium (strain 197N).